The chain runs to 195 residues: Interferon tau (195 aa).

A signal peptide spans 1–23; sequence MAFMLSLLMALVLVSYGLGGSLG. Disulfide bonds link C52-C162 and C87-C109.

This sequence belongs to the alpha/beta interferon family. IFN-alphaII subfamily.

The protein resides in the secreted. Functionally, paracrine hormone primarily responsible for maternal recognition of pregnancy. Interacts with endometrial receptors, probably type I interferon receptors, and blocks estrogen receptor expression, preventing the estrogen-induced increase in oxytocin receptor expression in the endometrium. This results in the suppression of the pulsatile endometrial release of the luteolytic hormone prostaglandin F2-alpha, hindering the regression of the corpus luteum (luteolysis) and therefore a return to ovarian cyclicity. This, and a possible direct effect of IFN-tau on prostaglandin synthesis, leads in turn to continued ovarian progesterone secretion, which stimulates the secretion by the endometrium of the nutrients required for the growth of the conceptus. In summary, displays particularly high antiviral and antiproliferative potency concurrently with particular weak cytotoxicity, high antiluteolytic activity and immunomodulatory properties. In contrast with other IFNs, IFN-tau is not virally inducible. The protein is Interferon tau (IFNT) of Giraffa camelopardalis (Giraffe).